Reading from the N-terminus, the 385-residue chain is Rubredoxin-NAD(+) reductase (385 aa).

FAD is bound by residues 8–11, 32–33, I79, E156, D275, and I293; these read AGTA and SR.

The protein belongs to the FAD-dependent oxidoreductase family. As to quaternary structure, homodimer. Requires FAD as cofactor.

The protein resides in the cytoplasm. The enzyme catalyses 2 reduced [rubredoxin] + NAD(+) + H(+) = 2 oxidized [rubredoxin] + NADH. It functions in the pathway hydrocarbon metabolism; alkane degradation. Functionally, involved in the hydrocarbon hydroxylating system, which transfers electrons from NADH to rubredoxin reductase and then through rubredoxin to alkane 1 monooxygenase. The sequence is that of Rubredoxin-NAD(+) reductase (alkT) from Ectopseudomonas oleovorans (Pseudomonas oleovorans).